The primary structure comprises 149 residues: DnaJ homolog subfamily C member 24 (149 aa).

A J domain is found at 11–82 (DWYSILGADP…ETKKEYDLQR (72 aa)). Residues 93–148 (VDARIYLEEMSWNEDDHSFSLSCRCGGKYSVSKDEAEEVTLISCDTCSLIIELLHY) form the DPH-type MB domain. Cys-115, Cys-117, Cys-136, and Cys-139 together coordinate Zn(2+).

Belongs to the DPH4 family. In terms of assembly, monomer and homooligomer. Iron binding promotes oligomerization.

It localises to the cytoplasm. The protein localises to the cytoskeleton. It participates in protein modification; peptidyl-diphthamide biosynthesis. Stimulates the ATPase activity of several Hsp70-type chaperones. This ability is enhanced by iron-binding. The iron-bound form is redox-active and can function as electron carrier. Plays a role in the diphthamide biosynthesis, a post-translational modification of histidine which occurs in translation elongation factor 2 (EEF2). This is DnaJ homolog subfamily C member 24 (DNAJC24) from Bos taurus (Bovine).